The following is a 397-amino-acid chain: MTTNTVSRKVAWLRVVTLAIAAFIFNTTEFVPVGLLSDIARSFAMPTAQVGIMLTIYAWVVALMSLPFMLLTSQVERRKLLICLFVLFIASHVLSFLAWNFTVLVISRIGIAFAHAVFWSITASLAIRLAPPGKRAQALSLIATGTALAMVLGLPIGRIVGQYFGWRTTFFAIGIGALITLVCLIKLLPKLPSEHSGSLKSLPLLFRRPALMSIYLLTVVVVTAHYTAYSYIEPFVQTVAGLSANFATVLLLILGGAGIIGSVVFGKLGNQYASPLISIAIMLLVICLMLLLPAADSESHLAVLSIFWGIAIMVIGLGMQVKVLALAPDATDVAMALFSGIFNIGIGAGALVGNQVSLHWSMSTIGYVGAVPALAALVWSIIIFRRWPVSLEEQPQH.

The next 12 helical transmembrane spans lie at 15–35 (VVTLAIAAFIFNTTEFVPVGL), 50–70 (VGIMLTIYAWVVALMSLPFML), 81–101 (LICLFVLFIASHVLSFLAWNF), 103–123 (VLVISRIGIAFAHAVFWSITA), 136–156 (AQALSLIATGTALAMVLGLPI), 169–189 (TFFAIGIGALITLVCLIKLLP), 209–229 (PALMSIYLLTVVVVTAHYTAY), 246–266 (FATVLLLILGGAGIIGSVVFG), 275–295 (PLISIAIMLLVICLMLLLPAA), 301–321 (LAVLSIFWGIAIMVIGLGMQV), 333–353 (VAMALFSGIFNIGIGAGALVG), and 364–384 (TIGYVGAVPALAALVWSIIIF).

Belongs to the major facilitator superfamily. SotB (TC 2.A.1.2) family.

It is found in the cell inner membrane. Functionally, involved in the efflux of sugars. The physiological role may be the reduction of the intracellular concentration of toxic sugars or sugar metabolites. This Citrobacter koseri (strain ATCC BAA-895 / CDC 4225-83 / SGSC4696) protein is Probable sugar efflux transporter.